Reading from the N-terminus, the 141-residue chain is Ribonuclease P protein component (141 aa).

Residues 114-134 show a composition bias toward basic and acidic residues; sequence RRIKAKGERRGDGKRRTERPE. Residues 114 to 141 form a disordered region; that stretch reads RRIKAKGERRGDGKRRTERPESGPVNGK.

It belongs to the RnpA family. As to quaternary structure, consists of a catalytic RNA component (M1 or rnpB) and a protein subunit.

It catalyses the reaction Endonucleolytic cleavage of RNA, removing 5'-extranucleotides from tRNA precursor.. In terms of biological role, RNaseP catalyzes the removal of the 5'-leader sequence from pre-tRNA to produce the mature 5'-terminus. It can also cleave other RNA substrates such as 4.5S RNA. The protein component plays an auxiliary but essential role in vivo by binding to the 5'-leader sequence and broadening the substrate specificity of the ribozyme. The sequence is that of Ribonuclease P protein component from Brucella anthropi (strain ATCC 49188 / DSM 6882 / CCUG 24695 / JCM 21032 / LMG 3331 / NBRC 15819 / NCTC 12168 / Alc 37) (Ochrobactrum anthropi).